The primary structure comprises 353 residues: Protein RecA (353 aa).

Residue 64–71 (GPESSGKT) participates in ATP binding. Residues 331–353 (LEEASAQKEEVPVEDKLFDDELE) are disordered. Positions 335–346 (SAQKEEVPVEDK) are enriched in basic and acidic residues.

This sequence belongs to the RecA family.

It localises to the cytoplasm. Functionally, can catalyze the hydrolysis of ATP in the presence of single-stranded DNA, the ATP-dependent uptake of single-stranded DNA by duplex DNA, and the ATP-dependent hybridization of homologous single-stranded DNAs. It interacts with LexA causing its activation and leading to its autocatalytic cleavage. In Macrococcus caseolyticus (strain JCSC5402) (Macrococcoides caseolyticum), this protein is Protein RecA.